A 64-amino-acid polypeptide reads, in one-letter code: Sec-independent protein translocase protein TatA (64 aa).

A helical transmembrane segment spans residues 10–30; that stretch reads LVLILGIALIIFGPGKLPELG.

This sequence belongs to the TatA/E family. In terms of assembly, forms a complex with TatC.

Its subcellular location is the cell membrane. In terms of biological role, part of the twin-arginine translocation (Tat) system that transports large folded proteins containing a characteristic twin-arginine motif in their signal peptide across membranes. TatA could form the protein-conducting channel of the Tat system. The chain is Sec-independent protein translocase protein TatA from Alkaliphilus oremlandii (strain OhILAs) (Clostridium oremlandii (strain OhILAs)).